The sequence spans 115 residues: Protein translation factor SUI1 homolog (115 aa).

It belongs to the SUI1 family.

Its function is as follows. Probably involved in translation. In Zea mays (Maize), this protein is Protein translation factor SUI1 homolog (TIF).